A 327-amino-acid chain; its full sequence is Beta-ketoacyl-[acyl-carrier-protein] synthase III 2 (327 aa).

Active-site residues include Cys-114 and His-251. The segment at 252-256 (SANLR) is ACP-binding. Asn-281 is a catalytic residue.

This sequence belongs to the thiolase-like superfamily. FabH family. In terms of assembly, homodimer.

It is found in the cytoplasm. It carries out the reaction malonyl-[ACP] + acetyl-CoA + H(+) = 3-oxobutanoyl-[ACP] + CO2 + CoA. It participates in lipid metabolism; fatty acid biosynthesis. Functionally, catalyzes the condensation reaction of fatty acid synthesis by the addition to an acyl acceptor of two carbons from malonyl-ACP. Catalyzes the first condensation reaction which initiates fatty acid synthesis and may therefore play a role in governing the total rate of fatty acid production. Possesses both acetoacetyl-ACP synthase and acetyl transacylase activities. Its substrate specificity determines the biosynthesis of branched-chain and/or straight-chain of fatty acids. This chain is Beta-ketoacyl-[acyl-carrier-protein] synthase III 2, found in Bacillus cereus (strain ATCC 14579 / DSM 31 / CCUG 7414 / JCM 2152 / NBRC 15305 / NCIMB 9373 / NCTC 2599 / NRRL B-3711).